The chain runs to 174 residues: Beta-lactoglobulin (174 aa).

The N-terminal stretch at 1–18 is a signal peptide; it reads MKFLLLTVGLALIGAIQA. 2 cysteine pairs are disulfide-bonded: Cys-79–Cys-172 and Cys-122–Cys-134.

Belongs to the calycin superfamily. Lipocalin family. As to quaternary structure, monomer.

Its subcellular location is the secreted. In terms of biological role, lactoglobulin is the primary component of whey, it binds retinol and is probably involved in the transport of that molecule. In Notamacropus eugenii (Tammar wallaby), this protein is Beta-lactoglobulin (LGB).